Here is a 1217-residue protein sequence, read N- to C-terminus: Inactive disease resistance protein RPS4 (1217 aa).

Residues 14-175 (PQHQVFINFR…EIVKAVKTAL (162 aa)) form the TIR domain. Glu88 is an active-site residue. Residues 211 to 472 (EQRLKDLEEK…FRSQDKDYVE (262 aa)) form the NB-ARC domain. LRR repeat units follow at residues 260–285 (HALI…LLGE), 436–459 (PNIV…AFLD), 614–636 (LKEV…DFNP), 637–659 (INLV…DKDT), 682–706 (AEKL…MKKM), 708–728 (MLAF…EMNL), 729–749 (ISLK…PLIS), 750–774 (DNIE…KLQR), 796–818 (LKAL…EIDI), 819–842 (SFLN…SVQY), and 861–887 (LSQL…NLQC). The disordered stretch occupies residues 1162–1195 (TEGVDGRVKKKKKTRMDNGRPKKKQRSGRDDNQT). A Nuclear localization signal motif is present at residues 1170-1177 (KKKKKTRM).

As to quaternary structure, interacts with EDS1.

Its subcellular location is the nucleus. It carries out the reaction NAD(+) + H2O = ADP-D-ribose + nicotinamide + H(+). The sequence is that of Inactive disease resistance protein RPS4 (RPS4) from Arabidopsis thaliana (Mouse-ear cress).